The sequence spans 337 residues: D-alanine--D-alanine ligase (337 aa).

The region spanning 124 to 330 is the ATP-grasp domain; that stretch reads KMWFSALGIP…FTEYLSLVIN (207 aa). An ATP-binding site is contributed by 154–209; that stretch reads ALAQWGSIFVKAASQGSSVGCYKVDDSDKVAGVLKDAFGYAPYVIVEKTIKARELE. Positions 284, 297, and 299 each coordinate Mg(2+).

It belongs to the D-alanine--D-alanine ligase family. The cofactor is Mg(2+). It depends on Mn(2+) as a cofactor.

It is found in the cytoplasm. It catalyses the reaction 2 D-alanine + ATP = D-alanyl-D-alanine + ADP + phosphate + H(+). Its pathway is cell wall biogenesis; peptidoglycan biosynthesis. Functionally, cell wall formation. The chain is D-alanine--D-alanine ligase from Shewanella baltica (strain OS195).